The primary structure comprises 248 residues: Cyclo(L-leucyl-L-leucyl) synthase (248 aa).

Residue S37 is the Nucleophile of the active site. Substrate contacts are provided by residues N40, 180–184 (YVIAE), Y204, and 209–210 (KL).

This sequence belongs to the CDPS family. As to quaternary structure, monomer.

It carries out the reaction 2 L-leucyl-tRNA(Leu) = cyclo(L-leucyl-L-leucyl) + 2 tRNA(Leu) + 2 H(+). Functionally, involved in the biosynthesis of pulcherrimin, a red extracellular pigment. It uses activated amino acids in the form of aminoacyl-tRNAs (aa-tRNAs) as substrates to catalyze the ATP-independent formation of cyclodipeptides which are intermediates in diketopiperazine (DKP) biosynthetic pathways. Catalyzes the formation of cyclo(L-Leu-L-Leu) (cLL) from L-leucyl-tRNA(Leu). Can also incorporate various nonpolar residues, such as L-phenylalanine, L-leucine and methionine, into cyclodipeptides. This Bacillus subtilis (strain 168) protein is Cyclo(L-leucyl-L-leucyl) synthase (yvmC).